The primary structure comprises 27 residues: Potassium channel toxin alpha-KTx 32.1 (27 aa).

2 cysteine pairs are disulfide-bonded: cysteine 5–cysteine 18 and cysteine 12–cysteine 25.

Expressed by the venom gland.

The protein resides in the secreted. In terms of biological role, blocker of voltage-gated potassium channels. Inhibits voltage-gated potassium channels Kv1.2/KCNA2 (Kd=0.96 nM) and Kv1.3/KCNA3 (Kd=1.3 nM). Does not inhibit Kv1.1/KCNA1, Kv1.5/KCNA5, Kv11.1/KCNH2/ERG1, KCa1.1/KCNMA1, KCa3.1/KCNN4, NaV1.5/SCN5A, NaV1.4/SCN4A or HV1/HVCN1. Strongly inhibits the expression of the activation markers interleukin-2 receptor and CD40 ligand/CD40LG in anti-CD3-activated CD4(+) TEM lymphocytes. In Centruroides margaritatus (Central American bark Scorpion), this protein is Potassium channel toxin alpha-KTx 32.1.